The primary structure comprises 147 residues: MSLFTILNGPNLNLLGQRQPEIYGYETLADVEADCRAIAEAAGHELFFAQSNREYELIDWIHEARGKSAGIVINPGAFTHTSVAILDALNAFEAPVIEVHISNIHKREVFRHHSYVSTRAEGVIAGLGIEGYGVALRHLINLFSRSS.

Tyr-23 functions as the Proton acceptor in the catalytic mechanism. The substrate site is built by Asn-74, His-80, and Asp-87. His-100 functions as the Proton donor in the catalytic mechanism. Residues 101-102 and Arg-111 contribute to the substrate site; that span reads IS.

The protein belongs to the type-II 3-dehydroquinase family. Homododecamer.

The enzyme catalyses 3-dehydroquinate = 3-dehydroshikimate + H2O. It participates in metabolic intermediate biosynthesis; chorismate biosynthesis; chorismate from D-erythrose 4-phosphate and phosphoenolpyruvate: step 3/7. Catalyzes a trans-dehydration via an enolate intermediate. The polypeptide is 3-dehydroquinate dehydratase 2 (aroQ2) (Agrobacterium fabrum (strain C58 / ATCC 33970) (Agrobacterium tumefaciens (strain C58))).